Consider the following 203-residue polypeptide: uncharacterized protein (203 aa).

A signal peptide spans 1–20 (MDELILPILILLFLVFVAYF).

This is an uncharacterized protein from Pasteurella multocida (strain Pm70).